The sequence spans 503 residues: ATP synthase subunit alpha (503 aa).

Residue glycine 169–threonine 176 coordinates ATP.

This sequence belongs to the ATPase alpha/beta chains family. F-type ATPases have 2 components, CF(1) - the catalytic core - and CF(0) - the membrane proton channel. CF(1) has five subunits: alpha(3), beta(3), gamma(1), delta(1), epsilon(1). CF(0) has three main subunits: a(1), b(2) and c(9-12). The alpha and beta chains form an alternating ring which encloses part of the gamma chain. CF(1) is attached to CF(0) by a central stalk formed by the gamma and epsilon chains, while a peripheral stalk is formed by the delta and b chains.

It is found in the cell membrane. The enzyme catalyses ATP + H2O + 4 H(+)(in) = ADP + phosphate + 5 H(+)(out). Functionally, produces ATP from ADP in the presence of a proton gradient across the membrane. The alpha chain is a regulatory subunit. The chain is ATP synthase subunit alpha from Macrococcus caseolyticus (strain JCSC5402) (Macrococcoides caseolyticum).